A 457-amino-acid chain; its full sequence is Argininosuccinate lyase (457 aa).

The protein belongs to the lyase 1 family. Argininosuccinate lyase subfamily.

It is found in the cytoplasm. The enzyme catalyses 2-(N(omega)-L-arginino)succinate = fumarate + L-arginine. It functions in the pathway amino-acid biosynthesis; L-arginine biosynthesis; L-arginine from L-ornithine and carbamoyl phosphate: step 3/3. This chain is Argininosuccinate lyase, found in Klebsiella pneumoniae (strain 342).